Here is a 172-residue protein sequence, read N- to C-terminus: Shikimate kinase (172 aa).

14 to 19 provides a ligand contact to ATP; it reads GAGKTT. Thr18 contributes to the Mg(2+) binding site. Substrate-binding residues include Asp36, Arg60, and Gly82. ATP is bound at residue Arg119. Arg137 provides a ligand contact to substrate.

This sequence belongs to the shikimate kinase family. In terms of assembly, monomer. It depends on Mg(2+) as a cofactor.

The protein localises to the cytoplasm. The catalysed reaction is shikimate + ATP = 3-phosphoshikimate + ADP + H(+). It participates in metabolic intermediate biosynthesis; chorismate biosynthesis; chorismate from D-erythrose 4-phosphate and phosphoenolpyruvate: step 5/7. Its function is as follows. Catalyzes the specific phosphorylation of the 3-hydroxyl group of shikimic acid using ATP as a cosubstrate. The chain is Shikimate kinase from Thermobifida fusca (strain YX).